A 142-amino-acid chain; its full sequence is Putative regulator of rDNA transcription protein 16 (142 aa).

3 helical membrane passes run 19–39 (ILLT…VMVA), 84–104 (FLLF…AIFL), and 111–131 (SIFI…GLCH).

The protein localises to the membrane. Identified in a screen for mutants with decreased levels of rDNA transcription. This chain is Putative regulator of rDNA transcription protein 16 (RRT16), found in Saccharomyces cerevisiae (strain ATCC 204508 / S288c) (Baker's yeast).